Reading from the N-terminus, the 406-residue chain is Cysteine desulfurase (406 aa).

Position 226 is an N6-(pyridoxal phosphate)lysine (lysine 226). Cysteine 364 (cysteine persulfide intermediate) is an active-site residue.

It belongs to the class-V pyridoxal-phosphate-dependent aminotransferase family. Csd subfamily. In terms of assembly, homodimer. Interacts with SufE and the SufBCD complex composed of SufB, SufC and SufD. The interaction with SufE is required to mediate the direct transfer of the sulfur atom from the S-sulfanylcysteine. Pyridoxal 5'-phosphate serves as cofactor.

It is found in the cytoplasm. It carries out the reaction (sulfur carrier)-H + L-cysteine = (sulfur carrier)-SH + L-alanine. It catalyses the reaction L-selenocysteine + AH2 = hydrogenselenide + L-alanine + A + H(+). It functions in the pathway cofactor biosynthesis; iron-sulfur cluster biosynthesis. Functionally, cysteine desulfurases mobilize the sulfur from L-cysteine to yield L-alanine, an essential step in sulfur metabolism for biosynthesis of a variety of sulfur-containing biomolecules. Component of the suf operon, which is activated and required under specific conditions such as oxidative stress and iron limitation. Acts as a potent selenocysteine lyase in vitro, that mobilizes selenium from L-selenocysteine. Selenocysteine lyase activity is however unsure in vivo. In Escherichia coli O9:H4 (strain HS), this protein is Cysteine desulfurase.